We begin with the raw amino-acid sequence, 464 residues long: MSRSTHASGHMETVQVISALTDYIDQSKFAEIHSKLKRGDGPGESGKSTIFQIIGIAGRPSLSKSSEFSLKATEITLLSTCYHMLPDDYFGLLPLSSASVNATSTLLSTATISRPSFSVQTSSSTFANFLMSGTSWRSRRQRLKIVDVGGQRSQRRKLTAELAQDIKALWADPGIQNTFQRSSEFQLNDSAAYYFDSIDRISQPLYLPSENDVLRSRTKTTGIIETVFEIQNSTFRMVDVGGQRELANAHTELNNPIVQREEFVKQLRNRDKGDDESMEIDEGFVAALEHALPPTGGWGLGIDRLVMFLTSQSNIKEVLLFPAMKPEGKNAISYPPGTRCSMVRVFPCCSSTLTFSFCFFFSPFFMTVILFVEAAAMKVRGGYSGTCLSVSPRFSNGGDVLWRTSETKRDKYNEKRHAAVKTPAQRSFLESGWNTASDVKCCSIRRFPYLPLPLSSSPFRFPPP.

The G-alpha domain occupies 33 to 415 (HSKLKRGDGP…ETKRDKYNEK (383 aa)). Positions 36–49 (LKRGDGPGESGKST) are G1 motif. Residues 41–48 (GPGESGKS), 147–151 (DVGGQ), 214–220 (LRSRTKT), 239–243 (DVGGQ), 268–271 (RNRD), and 310–313 (TSQS) contribute to the GTP site. Ser-48 contributes to the Mg(2+) binding site. The tract at residues 212 to 220 (DVLRSRTKT) is G2 motif. A Mg(2+)-binding site is contributed by Thr-220. Positions 235–244 (FRMVDVGGQR) are G3 motif. The tract at residues 306–313 (VMFLTSQS) is G4 motif. Residues 382–387 (GYSGTC) are G5 motif.

The protein in the N-terminal section; belongs to the G-alpha family. This sequence in the C-terminal section; belongs to the class-II aminoacyl-tRNA synthetase family. As to quaternary structure, g proteins are composed of 3 units; alpha, beta and gamma. The alpha chain contains the guanine nucleotide binding site.

In terms of biological role, guanine nucleotide-binding proteins (G proteins) are involved as modulators or transducers in various transmembrane signaling systems. This Leishmania donovani protein is Putative guanine nucleotide-binding protein subunit alpha.